Reading from the N-terminus, the 131-residue chain is Profilin-1 (131 aa).

This sequence belongs to the profilin family. Occurs in many kinds of cells as a complex with monomeric actin in a 1:1 ratio.

Its subcellular location is the cytoplasm. The protein localises to the cytoskeleton. In terms of biological role, binds to actin and affects the structure of the cytoskeleton. At high concentrations, profilin prevents the polymerization of actin, whereas it enhances it at low concentrations. By binding to PIP2, it inhibits the formation of IP3 and DG. The chain is Profilin-1 (PRO1) from Ricinus communis (Castor bean).